The primary structure comprises 172 residues: Adenine phosphoribosyltransferase (172 aa).

Belongs to the purine/pyrimidine phosphoribosyltransferase family. As to quaternary structure, homodimer.

It localises to the cytoplasm. It carries out the reaction AMP + diphosphate = 5-phospho-alpha-D-ribose 1-diphosphate + adenine. Its pathway is purine metabolism; AMP biosynthesis via salvage pathway; AMP from adenine: step 1/1. In terms of biological role, catalyzes a salvage reaction resulting in the formation of AMP, that is energically less costly than de novo synthesis. This Staphylococcus aureus (strain bovine RF122 / ET3-1) protein is Adenine phosphoribosyltransferase.